A 430-amino-acid polypeptide reads, in one-letter code: Protein translocase subunit SecY (430 aa).

10 consecutive transmembrane segments (helical) span residues 18–38 (IFFT…PAPG), 68–88 (FSIF…MQLL), 117–137 (FAII…NNYL), 148–168 (MSYL…LWLG), 179–199 (GISI…LIQF), 215–235 (LQVA…VYVL), 270–290 (VIPV…TMFF), 308–328 (NIGM…YAFV), 368–388 (FVGS…TKFM), and 390–410 (LPQS…VAIE).

The protein belongs to the SecY/SEC61-alpha family. As to quaternary structure, component of the Sec protein translocase complex. Heterotrimer consisting of SecY, SecE and SecG subunits. The heterotrimers can form oligomers, although 1 heterotrimer is thought to be able to translocate proteins. Interacts with the ribosome. Interacts with SecDF, and other proteins may be involved. Interacts with SecA.

It is found in the cell membrane. Its function is as follows. The central subunit of the protein translocation channel SecYEG. Consists of two halves formed by TMs 1-5 and 6-10. These two domains form a lateral gate at the front which open onto the bilayer between TMs 2 and 7, and are clamped together by SecE at the back. The channel is closed by both a pore ring composed of hydrophobic SecY resides and a short helix (helix 2A) on the extracellular side of the membrane which forms a plug. The plug probably moves laterally to allow the channel to open. The ring and the pore may move independently. This Staphylococcus carnosus (strain TM300) protein is Protein translocase subunit SecY.